The sequence spans 420 residues: Protein disulfide isomerase Creld1 (420 aa).

The signal sequence occupies residues Met1–Leu29. The Extracellular portion of the chain corresponds to Gln30–Glu362. The CXXC signature appears at Cys46–Cys49. 4 disulfide bridges follow: Cys46-Cys49, Cys155-Cys169, Cys163-Cys181, and Cys183-Cys192. An EGF-like 1 domain is found at Leu153–Gly193. N-linked (GlcNAc...) asparagine glycosylation occurs at Asn205. FU repeat units lie at residues His208–Thr255 and Ser268–Pro315. Residues Cys278 to Cys281 carry the CXXC motif. Cystine bridges form between Cys278–Cys281, Cys309–Cys321, Cys314–Cys330, and Cys332–Cys343. The EGF-like 2; calcium-binding domain maps to Asp305 to Ile342. A helical transmembrane segment spans residues Met363–Ala383. Residue Lys384 is a topological domain, cytoplasmic. A helical transmembrane segment spans residues Gly385–Leu405. The Extracellular portion of the chain corresponds to Ser406 to Arg420.

This sequence belongs to the CRELD family. As to expression, expressed in myoblast C2C12 cells (at protein level).

It localises to the membrane. The catalysed reaction is Catalyzes the rearrangement of -S-S- bonds in proteins.. Its function is as follows. Protein disulfide isomerase. Promotes the localization of acetylcholine receptors (AChRs) to the plasma membrane. The polypeptide is Protein disulfide isomerase Creld1 (Creld1) (Mus musculus (Mouse)).